The primary structure comprises 371 residues: Cytochrome b (371 aa).

8 helical membrane passes run 25 to 45, 69 to 90, 105 to 125, 170 to 190, 218 to 238, 280 to 300, 312 to 332, and 339 to 358; these read FGSMLLACSSMQVLTGFFLAV, WMMQNLHAIGASMFFICIYIHI, WLSGTTLLIMLMVTAFFGXXX, XXXXXXXXXXXXXXXXXXXXX, YKDLLMLSLMVLMLLMTVSFL, LGGALALAMSIMILLTVPFTH, IMQLMFWTLVATFMVITWAAT, and FTMISQIASTIYFLFFIMNP. Residues His75 and His89 each coordinate heme b. Residues Xaa174 and Xaa188 each coordinate heme b.

Belongs to the cytochrome b family. In terms of assembly, the cytochrome bc1 complex contains 3 respiratory subunits (MT-CYB, CYC1 and UQCRFS1), 2 core proteins (UQCRC1 and UQCRC2) and probably 6 low-molecular weight proteins. Requires heme b as cofactor.

The protein resides in the mitochondrion inner membrane. Component of the ubiquinol-cytochrome c reductase complex (complex III or cytochrome b-c1 complex) that is part of the mitochondrial respiratory chain. The b-c1 complex mediates electron transfer from ubiquinol to cytochrome c. Contributes to the generation of a proton gradient across the mitochondrial membrane that is then used for ATP synthesis. The chain is Cytochrome b (MT-CYB) from Eryx tataricus (Tartar sand boa).